The primary structure comprises 152 residues: UPF0266 membrane protein Ent638_2389 (152 aa).

Helical transmembrane passes span 6 to 26 (IVLVLFIVALLAYAFYDEFIM), 45 to 65 (VDAFIFAGLLAILIYNNVMSQ), and 67 to 87 (ALLTTWLLCVLALMAFYLFWI).

This sequence belongs to the UPF0266 family.

The protein resides in the cell inner membrane. The protein is UPF0266 membrane protein Ent638_2389 of Enterobacter sp. (strain 638).